The following is a 968-amino-acid chain: Protein translocase subunit SecA 1 (968 aa).

Residues Gln86, Gly104–Thr108, and Asp493 each bind ATP. 2 stretches are compositionally biased toward basic and acidic residues: residues Glu858 to Asp868 and Glu883 to Ala898. The tract at residues Glu858–Val968 is disordered. Zn(2+) contacts are provided by Cys949, Cys951, Cys960, and His961. Positions Lys955–Val968 are enriched in basic residues.

It belongs to the SecA family. In terms of assembly, monomer and homodimer. Part of the essential Sec protein translocation apparatus which comprises SecA, SecYEG and auxiliary proteins SecDF. Other proteins may also be involved. Zn(2+) is required as a cofactor.

It is found in the cell membrane. It localises to the cytoplasm. It carries out the reaction ATP + H2O + cellular proteinSide 1 = ADP + phosphate + cellular proteinSide 2.. Part of the Sec protein translocase complex. Interacts with the SecYEG preprotein conducting channel. Has a central role in coupling the hydrolysis of ATP to the transfer of proteins into and across the cell membrane, serving as an ATP-driven molecular motor driving the stepwise translocation of polypeptide chains across the membrane. The chain is Protein translocase subunit SecA 1 from Thermobifida fusca (strain YX).